The sequence spans 289 residues: Cell division protein ZipA (289 aa).

A topological domain (periplasmic) is located at residue Met-1. Residues 2 to 22 (DIGLREWLIVIGLIVIAGILF) form a helical membrane-spanning segment. The Cytoplasmic portion of the chain corresponds to 23–289 (DGWRRMRGGK…HERRSLMQKR (267 aa)). The interval 65-141 (HREPSFDEQD…KEREKAPAVA (77 aa)) is disordered. The segment covering 81 to 99 (RETKERKGGKRQEEPRQGD) has biased composition (basic and acidic residues). Residues 100-114 (LDLDEGLALEADPSD) show a composition bias toward acidic residues.

This sequence belongs to the ZipA family. Interacts with FtsZ via their C-terminal domains.

The protein localises to the cell inner membrane. In terms of biological role, essential cell division protein that stabilizes the FtsZ protofilaments by cross-linking them and that serves as a cytoplasmic membrane anchor for the Z ring. Also required for the recruitment to the septal ring of downstream cell division proteins. The polypeptide is Cell division protein ZipA (Pseudomonas aeruginosa (strain UCBPP-PA14)).